The following is a 516-amino-acid chain: Lysophosphatidylcholine acyltransferase 2B (516 aa).

An N-linked (GlcNAc...) asparagine glycan is attached at N28. The next 3 membrane-spanning stretches (helical) occupy residues 44–64, 68–88, and 102–122; these read THLSAWRWACTIILGTVLVPV, CIVFLLILLWPVAVLSAINLP, and LIKSALVFLFRLGFFFAGFLV. An HXXXXD motif motif is present at residues 142–147; the sequence is HSTFFD. 2 consecutive EF-hand domains span residues 387 to 422 and 424 to 459; these read PISEPLRQLFSLFDRNQDGTIDFREYVIGLTVLCNP and NTEKILQMSFKLFDLDEDGYVTERELTTMLQAAFGV. Residues D400, N402, D404, T406, E411, D437, D439, D441, Y443, and E448 each contribute to the Ca(2+) site.

Belongs to the 1-acyl-sn-glycerol-3-phosphate acyltransferase family.

It localises to the membrane. The protein operates within lipid metabolism; phospholipid metabolism. Functionally, probable acetyltransferase. The polypeptide is Lysophosphatidylcholine acyltransferase 2B (Lpcat2b) (Mus musculus (Mouse)).